The sequence spans 132 residues: Pro-MCH 2 (132 aa).

An N-terminal signal peptide occupies residues 1-24; that stretch reads MRDSVLSVIFALALFLECYTPSMA. Cysteine 120 and cysteine 129 are disulfide-bonded.

The protein belongs to the melanin-concentrating hormone family. As to expression, pituitary gland. Produced in neurons of lateral basal hypothalamus which project both to the brain and to the neural lobe of the pituitary gland from where MCH is released.

Plays a role in skin pigmentation by antagonizing the action of melanotropin alpha. Induces melanin concentration within the melanophores. May participate in the control of the hypothalamo-pituitary adrenal gland axis by inhibiting the release of ACTH. The sequence is that of Pro-MCH 2 (mch2) from Oncorhynchus keta (Chum salmon).